A 193-amino-acid polypeptide reads, in one-letter code: dCTP deaminase (193 aa).

DCTP-binding positions include 110–115 (RSSLAR), Asp128, 136–138 (VLE), Tyr171, Lys178, and Gln182. Glu138 serves as the catalytic Proton donor/acceptor. Positions 169–193 (RPYNRREDAKYRNQQGAVASRIDKD) are disordered.

The protein belongs to the dCTP deaminase family. Homotrimer.

It carries out the reaction dCTP + H2O + H(+) = dUTP + NH4(+). Its pathway is pyrimidine metabolism; dUMP biosynthesis; dUMP from dCTP (dUTP route): step 1/2. Functionally, catalyzes the deamination of dCTP to dUTP. The chain is dCTP deaminase from Sodalis glossinidius (strain morsitans).